A 123-amino-acid polypeptide reads, in one-letter code: Small ribosomal subunit protein uS12c (123 aa).

It belongs to the universal ribosomal protein uS12 family. Part of the 30S ribosomal subunit.

Its subcellular location is the plastid. The protein resides in the chloroplast. With S4 and S5 plays an important role in translational accuracy. Located at the interface of the 30S and 50S subunits. The polypeptide is Small ribosomal subunit protein uS12c (rps12) (Chlorokybus atmophyticus (Soil alga)).